A 193-amino-acid polypeptide reads, in one-letter code: ATP synthase subunit b (193 aa).

Residues 35-55 form a helical membrane-spanning segment; sequence IPMMLATFIAFVIVFLLLFFF.

The protein belongs to the ATPase B chain family. F-type ATPases have 2 components, F(1) - the catalytic core - and F(0) - the membrane proton channel. F(1) has five subunits: alpha(3), beta(3), gamma(1), delta(1), epsilon(1). F(0) has three main subunits: a(1), b(2) and c(10-14). The alpha and beta chains form an alternating ring which encloses part of the gamma chain. F(1) is attached to F(0) by a central stalk formed by the gamma and epsilon chains, while a peripheral stalk is formed by the delta and b chains.

The protein resides in the cell membrane. In terms of biological role, f(1)F(0) ATP synthase produces ATP from ADP in the presence of a proton or sodium gradient. F-type ATPases consist of two structural domains, F(1) containing the extramembraneous catalytic core and F(0) containing the membrane proton channel, linked together by a central stalk and a peripheral stalk. During catalysis, ATP synthesis in the catalytic domain of F(1) is coupled via a rotary mechanism of the central stalk subunits to proton translocation. Component of the F(0) channel, it forms part of the peripheral stalk, linking F(1) to F(0). The sequence is that of ATP synthase subunit b from Mycoplasmopsis synoviae (strain 53) (Mycoplasma synoviae).